The primary structure comprises 470 residues: Cyclic AMP receptor-like protein D (470 aa).

Over 1–16 the chain is Extracellular; it reads MSSCSSLSMDDRVKIG. Residues 17 to 37 form a helical membrane-spanning segment; that stretch reads YGSIAGASLSIIGSIGTIILI. At 38–123 the chain is on the cytoplasmic side; it reads KIRNKKQEKK…NNNQKTKVSH (86 aa). The chain crosses the membrane as a helical span at residues 124-144; the sequence is FIINLSIANLLASIFMITIKL. Residues 145–176 lie on the Extracellular side of the membrane; that stretch reads MMIHFNDKFIKVLPSTANHSFNALISVCTIGN. An N-linked (GlcNAc...) asparagine glycan is attached at asparagine 162. A disulfide bridge connects residues cysteine 172 and cysteine 287. A helical transmembrane segment spans residues 177–197; the sequence is GVIGFSFISTFFWTLAISMYI. Topologically, residues 198–253 are cytoplasmic; it reads YQQFLSSSTINSNNNNNNINNINNNNNNNINNINNSKNNNSINNFNNSNKSNKIIK. A helical transmembrane segment spans residues 254–274; sequence MLFYFVCWVIPFVLGSILVSG. Over 275–295 the chain is Extracellular; sequence SRLIELNSDLPWCSIDSNIQL. The chain crosses the membrane as a helical span at residues 296 to 316; that stretch reads ISFYFPLIICLLATTFFTILI. Residues 317–342 are Cytoplasmic-facing; sequence KYKFSNDKLACSSSSLINLQSKIIQR. The chain crosses the membrane as a helical span at residues 343-363; it reads LILFLIVILVCWVPSLISFFI. Topologically, residues 364-372 are extracellular; it reads SFFSKNCKQ. Residues 373–393 traverse the membrane as a helical segment; sequence FLWLEIISSTIQSCQGILNFL. Over 394-470 the chain is Cytoplasmic; sequence SYLSIFKKLK…DFDNNQIQEK (77 aa).

The protein belongs to the G-protein coupled receptor 5 family.

It is found in the membrane. Its function is as follows. Receptor for cAMP. This chain is Cyclic AMP receptor-like protein D (crlD), found in Dictyostelium discoideum (Social amoeba).